We begin with the raw amino-acid sequence, 488 residues long: Glutamate--tRNA ligase (488 aa).

The 'HIGH' region signature appears at 8 to 18 (PSPTGPLHIGG). Residues cysteine 105, cysteine 107, cysteine 132, and histidine 134 each contribute to the Zn(2+) site. Positions 249 to 253 (KMSKR) match the 'KMSKS' region motif. Lysine 252 contacts ATP.

The protein belongs to the class-I aminoacyl-tRNA synthetase family. Glutamate--tRNA ligase type 1 subfamily. As to quaternary structure, monomer. Zn(2+) is required as a cofactor.

The protein resides in the cytoplasm. The catalysed reaction is tRNA(Glu) + L-glutamate + ATP = L-glutamyl-tRNA(Glu) + AMP + diphosphate. Its function is as follows. Catalyzes the attachment of glutamate to tRNA(Glu) in a two-step reaction: glutamate is first activated by ATP to form Glu-AMP and then transferred to the acceptor end of tRNA(Glu). The protein is Glutamate--tRNA ligase of Desulfitobacterium hafniense (strain Y51).